A 307-amino-acid chain; its full sequence is Aspartate carbamoyltransferase catalytic subunit (307 aa).

Residues R58 and T59 each coordinate carbamoyl phosphate. Residue K86 participates in L-aspartate binding. R108, H136, and Q139 together coordinate carbamoyl phosphate. L-aspartate is bound by residues R169 and R223. G264 and P265 together coordinate carbamoyl phosphate.

It belongs to the aspartate/ornithine carbamoyltransferase superfamily. ATCase family. Heterododecamer (2C3:3R2) of six catalytic PyrB chains organized as two trimers (C3), and six regulatory PyrI chains organized as three dimers (R2).

The catalysed reaction is carbamoyl phosphate + L-aspartate = N-carbamoyl-L-aspartate + phosphate + H(+). It participates in pyrimidine metabolism; UMP biosynthesis via de novo pathway; (S)-dihydroorotate from bicarbonate: step 2/3. Catalyzes the condensation of carbamoyl phosphate and aspartate to form carbamoyl aspartate and inorganic phosphate, the committed step in the de novo pyrimidine nucleotide biosynthesis pathway. This is Aspartate carbamoyltransferase catalytic subunit from Syntrophus aciditrophicus (strain SB).